A 237-amino-acid chain; its full sequence is B3 domain-containing protein Os06g0194400 (237 aa).

2 disordered regions span residues methionine 1 to glutamate 23 and serine 38 to lysine 82. Residues phenylalanine 139–serine 230 constitute a DNA-binding region (TF-B3).

The protein resides in the nucleus. The polypeptide is B3 domain-containing protein Os06g0194400 (Oryza sativa subsp. japonica (Rice)).